The following is a 311-amino-acid chain: Hevamine-A (311 aa).

Residues 1 to 26 (MAKRTQAILLLLLAISLIMSSSHVDG) form the signal peptide. The region spanning 27-302 (GGIAIYWGQN…SSILDSVLFL (276 aa)) is the GH18 domain. Cystine bridges form between cysteine 46–cysteine 93 and cysteine 76–cysteine 83. The active-site Proton donor is glutamate 153. The cysteines at positions 185 and 214 are disulfide-linked. Positions 300-311 (LFLHSEECMTVL) are cleaved as a propeptide — removed in mature form.

This sequence belongs to the glycosyl hydrolase 18 family. Chitinase class II subfamily.

It localises to the vacuole. The enzyme catalyses Random endo-hydrolysis of N-acetyl-beta-D-glucosaminide (1-&gt;4)-beta-linkages in chitin and chitodextrins.. It carries out the reaction Hydrolysis of (1-&gt;4)-beta-linkages between N-acetylmuramic acid and N-acetyl-D-glucosamine residues in a peptidoglycan and between N-acetyl-D-glucosamine residues in chitodextrins.. Functionally, bifunctional enzyme with lysozyme / chitinase activity. May have a role in plugging the latex vessel and cessation of latex flow. This is Hevamine-A from Hevea brasiliensis (Para rubber tree).